Here is a 421-residue protein sequence, read N- to C-terminus: 5-hydroxytryptamine receptor 1A (421 aa).

Over 1–38 (MDMFSLGQGNNTTTSLEPFGTGGNDTGLSNVTFSYQVI) the chain is Extracellular. N-linked (GlcNAc...) asparagine glycosylation is found at asparagine 10, asparagine 11, asparagine 24, and asparagine 30. A helical transmembrane segment spans residues 39–59 (TSLLLGTLIFCAVLGNACVVA). Topologically, residues 60-73 (AIALERSLQNVANY) are cytoplasmic. The helical transmembrane segment at 74–98 (LIGSLAVTDLMVSVLVLPMAALYQV) threads the bilayer. Residues 99 to 107 (LNKWTLGQV) lie on the Extracellular side of the membrane. The helical transmembrane segment at 108–132 (TCDLFIALDVLCCTSSILHLCAIAL) threads the bilayer. A disulfide bridge connects residues cysteine 109 and cysteine 187. The serotonin site is built by aspartate 116 and cysteine 120. The DRY motif; important for ligand-induced conformation changes signature appears at 133-135 (DRY). The Cytoplasmic portion of the chain corresponds to 133-152 (DRYWAITDPIDYVNKRTPRR). A helical transmembrane segment spans residues 153–174 (AAALISLTWLIGFLISIPPMLG). Topologically, residues 175-193 (WRTPEDRSNPNECTISKDH) are extracellular. Residues 194 to 216 (GYTIYSTFGAFYIPLLLMLVLYG) traverse the membrane as a helical segment. Over 217-346 (RIFRAARFRI…LARERKTVKT (130 aa)) the chain is Cytoplasmic. The disordered stretch occupies residues 237-268 (GAGTSFGTSSAPPPKKSLNGQPGSGDCRRSAE). 4 residues coordinate 1D-myo-inositol 4-phosphate: threonine 314, lysine 345, threonine 346, and glycine 352. The chain crosses the membrane as a helical span at residues 347–370 (LGIIMGTFILCWLPFFIVALVLPF). The Extracellular portion of the chain corresponds to 371-378 (CESSCHMP). A helical membrane pass occupies residues 379–403 (ELLGAIINWLGYSNSLLNPVIYAYF). The short motif at 396 to 400 (NPVIY) is the NPxxY motif; important for ligand-induced conformation changes and signaling element. 1D-myo-inositol 4-phosphate is bound by residues phenylalanine 403, asparagine 404, and lysine 405. At 404-421 (NKDFQNAFKKIIKCKFCR) the chain is on the cytoplasmic side.

It belongs to the G-protein coupled receptor 1 family. 5-hydroxytryptamine receptor subfamily. HTR1A sub-subfamily. Heterodimer; heterodimerizes with GPER1. Interacts with YIF1B. Interacts with GPR39 and GALR1. Most abundantly expressed in midbrain, in dorsal raphe and hippocampus. Detected at lower levels in amygdala and brain cortex.

The protein resides in the cell membrane. It is found in the cell projection. The protein localises to the dendrite. Its activity is regulated as follows. G-protein coupled receptor activity is regulated by lipids: phosphatidylinositol 4-phosphate increases HTR1A-mediated activity. Plays a role in the regulation of dopamine and 5-hydroxytryptamine levels in the brain, and thereby affects neural activity, mood and behavior. Plays a role in the response to anxiogenic stimuli. Its function is as follows. G-protein coupled receptor for 5-hydroxytryptamine (serotonin). Also functions as a receptor for various drugs and psychoactive substances. Ligand binding causes a conformation change that triggers signaling via guanine nucleotide-binding proteins (G proteins) and modulates the activity of downstream effectors, such as adenylate cyclase. HTR1A is coupled to G(i)/G(o) G alpha proteins and mediates inhibitory neurotransmission: signaling inhibits adenylate cyclase activity and activates a phosphatidylinositol-calcium second messenger system that regulates the release of Ca(2+) ions from intracellular stores. Beta-arrestin family members regulate signaling by mediating both receptor desensitization and resensitization processes. This chain is 5-hydroxytryptamine receptor 1A (Htr1a), found in Mus musculus (Mouse).